The primary structure comprises 184 residues: Crossover junction endodeoxyribonuclease RuvC (184 aa).

Active-site residues include Asp-11, Glu-73, and Asp-147. Residues Asp-11, Glu-73, and Asp-147 each coordinate Mg(2+).

This sequence belongs to the RuvC family. Homodimer which binds Holliday junction (HJ) DNA. The HJ becomes 2-fold symmetrical on binding to RuvC with unstacked arms; it has a different conformation from HJ DNA in complex with RuvA. In the full resolvosome a probable DNA-RuvA(4)-RuvB(12)-RuvC(2) complex forms which resolves the HJ. The cofactor is Mg(2+).

The protein resides in the cytoplasm. It carries out the reaction Endonucleolytic cleavage at a junction such as a reciprocal single-stranded crossover between two homologous DNA duplexes (Holliday junction).. Its function is as follows. The RuvA-RuvB-RuvC complex processes Holliday junction (HJ) DNA during genetic recombination and DNA repair. Endonuclease that resolves HJ intermediates. Cleaves cruciform DNA by making single-stranded nicks across the HJ at symmetrical positions within the homologous arms, yielding a 5'-phosphate and a 3'-hydroxyl group; requires a central core of homology in the junction. The consensus cleavage sequence is 5'-(A/T)TT(C/G)-3'. Cleavage occurs on the 3'-side of the TT dinucleotide at the point of strand exchange. HJ branch migration catalyzed by RuvA-RuvB allows RuvC to scan DNA until it finds its consensus sequence, where it cleaves and resolves the cruciform DNA. The protein is Crossover junction endodeoxyribonuclease RuvC of Neisseria gonorrhoeae (strain ATCC 700825 / FA 1090).